A 463-amino-acid polypeptide reads, in one-letter code: Probable glycosyltransferase 3 (463 aa).

Topologically, residues 1 to 24 (MAVTGGGRPAVRQQAARGKQMQRT) are cytoplasmic. A helical; Signal-anchor for type II membrane protein membrane pass occupies residues 25–47 (FNNVKITLICGFITLLVLRGTVG). The Lumenal segment spans residues 48 to 463 (INLLTYGVGG…ALKMDAKIES (416 aa)). A disordered region spans residues 82 to 125 (EIRSDTDDDDDDEEEEPLGVDASTTTTTNSTTTTATAARRRSSN). Residues 87-99 (TDDDDDDEEEEPL) are compositionally biased toward acidic residues. Low complexity predominate over residues 103-118 (ASTTTTTNSTTTTATA). Residues asparagine 110, asparagine 125, and asparagine 442 are each glycosylated (N-linked (GlcNAc...) asparagine).

This sequence belongs to the glycosyltransferase 34 family.

It localises to the golgi apparatus membrane. Functionally, probable glycosyltransferase that may be involved in the biosynthesis of xyloglucan. This is Probable glycosyltransferase 3 from Oryza sativa subsp. japonica (Rice).